A 180-amino-acid chain; its full sequence is Cuticle protein 3 (180 aa).

The N-terminal stretch at methionine 1–glycine 16 is a signal peptide. A Chitin-binding type R&amp;R domain is found at glutamate 58–proline 121.

The chain is Cuticle protein 3 from Lonomia obliqua (Moth).